The sequence spans 89 residues: Small ribosomal subunit protein uS15 (89 aa).

This sequence belongs to the universal ribosomal protein uS15 family. As to quaternary structure, part of the 30S ribosomal subunit. Forms a bridge to the 50S subunit in the 70S ribosome, contacting the 23S rRNA.

Its function is as follows. One of the primary rRNA binding proteins, it binds directly to 16S rRNA where it helps nucleate assembly of the platform of the 30S subunit by binding and bridging several RNA helices of the 16S rRNA. Functionally, forms an intersubunit bridge (bridge B4) with the 23S rRNA of the 50S subunit in the ribosome. The sequence is that of Small ribosomal subunit protein uS15 from Saccharophagus degradans (strain 2-40 / ATCC 43961 / DSM 17024).